The primary structure comprises 60 residues: Large ribosomal subunit protein bL32 (60 aa).

Positions 1 to 23 (MAKHPVPKKKTSKSKRDMRRSHH) are enriched in basic residues. The disordered stretch occupies residues 1–34 (MAKHPVPKKKTSKSKRDMRRSHHALTAPNLTECP). Zn(2+) contacts are provided by cysteine 33, cysteine 36, cysteine 46, and cysteine 49. The C4-type zinc-finger motif lies at 33-49 (CPQCHGKKLSHHICPNC).

The protein belongs to the bacterial ribosomal protein bL32 family. As to quaternary structure, part of the 50S ribosomal subunit. Contacts proteins L17 and L22. Zn(2+) is required as a cofactor.

Its function is as follows. Forms a cluster with L17 and L22, and with L22, a pair of 'tweezers' that hold together all the domains of the 23S rRNA. Interacts with the antibiotic troleandomycin which blocks the peptide exit tunnel. This Deinococcus radiodurans (strain ATCC 13939 / DSM 20539 / JCM 16871 / CCUG 27074 / LMG 4051 / NBRC 15346 / NCIMB 9279 / VKM B-1422 / R1) protein is Large ribosomal subunit protein bL32 (rpmF).